A 41-amino-acid polypeptide reads, in one-letter code: Large ribosomal subunit protein bL36 (41 aa).

Belongs to the bacterial ribosomal protein bL36 family.

The sequence is that of Large ribosomal subunit protein bL36 from Bartonella bacilliformis (strain ATCC 35685 / KC583 / Herrer 020/F12,63).